We begin with the raw amino-acid sequence, 55 residues long: Ferredoxin (55 aa).

4Fe-4S ferredoxin-type domains follow at residues 2–27 and 28–55; these read HIITDECISCGACAAECPVEAIHEGT and GKYEVDADTCIDCGACEAVCPTGAVKAE. Cys8, Cys11, Cys14, Cys18, Cys37, Cys40, Cys43, and Cys47 together coordinate [4Fe-4S] cluster.

[4Fe-4S] cluster is required as a cofactor.

In terms of biological role, ferredoxins are iron-sulfur proteins that transfer electrons in a wide variety of metabolic reactions. The chain is Ferredoxin from Thermoanaerobacterium thermosaccharolyticum (Clostridium thermosaccharolyticum).